Reading from the N-terminus, the 115-residue chain is Movement protein TGB2 (115 aa).

Over 1–13 the chain is Cytoplasmic; sequence MSAQGHRLTAPVN. A helical membrane pass occupies residues 14-34; sequence SEKVYIVLGLSFALISITFLL. At 35-74 the chain is on the lumenal side; the sequence is SRNNLPHVGDNIHSLPHGDAYRDGTKAILYNSPNFGSRTS. Residues 75–95 form a helical membrane-spanning segment; it reads LNNSKNAAFAAVLLLSLLIYG. Over 96–115 the chain is Cytoplasmic; the sequence is SRCLSQRNHLCACGNNHSSN.

The protein belongs to the Tymovirales TGBp2 protein family.

The protein localises to the host endoplasmic reticulum membrane. In terms of biological role, plays a role in viral cell-to-cell propagation, by facilitating genome transport to neighboring plant cells through plasmosdesmata,. In Potato virus X (strain HB) (PVX), this protein is Movement protein TGB2.